We begin with the raw amino-acid sequence, 686 residues long: Methionine--tRNA ligase (686 aa).

The short motif at 15–25 is the 'HIGH' region element; it reads PYANGSIHLGH. Zn(2+)-binding residues include C146, C149, C159, and C162. A 'KMSKS' region motif is present at residues 332-336; sequence KMSKS. K335 provides a ligand contact to ATP. The region spanning 585–686 is the tRNA-binding domain; it reads AFEAVDMRIA…EGAQPGMRVM (102 aa).

Belongs to the class-I aminoacyl-tRNA synthetase family. MetG type 1 subfamily. Homodimer. It depends on Zn(2+) as a cofactor.

It localises to the cytoplasm. It catalyses the reaction tRNA(Met) + L-methionine + ATP = L-methionyl-tRNA(Met) + AMP + diphosphate. In terms of biological role, is required not only for elongation of protein synthesis but also for the initiation of all mRNA translation through initiator tRNA(fMet) aminoacylation. This Aliivibrio fischeri (strain ATCC 700601 / ES114) (Vibrio fischeri) protein is Methionine--tRNA ligase.